The primary structure comprises 3014 residues: Genome polyprotein (3014 aa).

The residue at position 2 (S2) is an N-acetylserine; by host. The interaction with STAT1 stretch occupies residues S2 to K23. Positions S2–P58 are interaction with EIF2AK2/PKR. Positions S2–R59 are interaction with DDX3X. The disordered stretch occupies residues S2–S75. Over S2–N168 the chain is Cytoplasmic. Short sequence motifs (nuclear localization signal) lie at residues P5–R13 and P38–K43. Residues P7–N16 show a composition bias toward basic residues. S53 is modified (phosphoserine; by host). 2 short sequence motifs (nuclear localization signal) span residues P58–P64 and P66–P71. Residues P58–T72 show a composition bias toward basic residues. 2 positions are modified to phosphoserine; by host: S99 and S116. The interval P112–A152 is important for endoplasmic reticulum and mitochondrial localization. The tract at residues V122 to P173 is interaction with APOA2. The segment at Y164–G167 is important for lipid droplets localization. The helical transmembrane segment at L169 to A189 threads the bilayer. Positions V178–A191 are cleaved as a propeptide — ER anchor for the core protein, removed in mature form by host signal peptidase. At S190–A358 the chain is on the lumenal side. N-linked (GlcNAc...) asparagine; by host glycosylation is found at N196, N209, and N234. The segment at L265–R296 is important for fusion. The N-linked (GlcNAc...) asparagine; by host glycan is linked to N305. Residues A359–A379 traverse the membrane as a helical segment. The Lumenal portion of the chain corresponds to G380–L726. Positions T385 to Q412 are HVR1. 3 N-linked (GlcNAc...) (high mannose) asparagine; by host glycosylation sites follow: N417, N423, and N430. 4 disulfide bridges follow: C429-C553, C452-C459, C487-C495, and C504-C509. A glycan (N-linked (GlcNAc...) asparagine; by host) is linked at N448. Residues A475–G479 are HVR2. Positions S481–P494 are CD81-binding 1. An N-linked (GlcNAc...) asparagine; by host glycan is attached at N533. Residues P545–G552 form a CD81-binding 2 region. N-linked (GlcNAc...) asparagine; by host glycosylation is present at N557. C565 and C570 are joined by a disulfide. N-linked (GlcNAc...) asparagine; by host glycosylation occurs at N578. Intrachain disulfides connect C582–C586, C598–C621, and C608–C645. N-linked (GlcNAc...) (high mannose) asparagine; by host glycans are attached at residues N624 and N646. A disulfide bond links C653 and C678. The interval A661–Q672 is PKR/eIF2-alpha phosphorylation homology domain (PePHD). A helical membrane pass occupies residues L727–A747. The Lumenal segment spans residues T748–A758. Residues A759–V779 traverse the membrane as a helical segment. The Cytoplasmic segment spans residues K780–L783. The helical transmembrane segment at V784–R804 threads the bilayer. Residues P805–S814 are Lumenal-facing. A helical transmembrane segment spans residues D815–G835. Residues Y836–H882 lie on the Cytoplasmic side of the membrane. The helical transmembrane segment at P883–L903 threads the bilayer. Residues Q904–L929 lie on the Lumenal side of the membrane. One can recognise a Peptidase C18 domain in the interval Q904–L1027. Positions H905–R1207 are protease NS2-3. C923 carries S-palmitoyl cysteine; by host lipidation. The helical transmembrane segment at V930–I950 threads the bilayer. Residues V930–I950 form an interaction with host SCPS1 region. Residues Y951–T1658 lie on the Cytoplasmic side of the membrane. Active-site for protease NS2 activity; shared with dimeric partner residues include H953, E973, and C994. A Peptidase S29 domain is found at A1028–P1209. Active-site charge relay system; for serine protease NS3 activity residues include H1084 and D1108. Zn(2+) is bound by residues C1124 and C1126. S1166 functions as the Charge relay system; for serine protease NS3 activity in the catalytic mechanism. Residues C1172 and H1176 each contribute to the Zn(2+) site. A Helicase ATP-binding domain is found at P1218–I1351. ATP is bound at residue A1231–S1238. Mg(2+) contacts are provided by S1238 and E1318. Positions D1317 to H1320 match the DECH box motif. In terms of domain architecture, Helicase C-terminal spans N1362–R1539. Residues Q1487–I1499 form an RNA-binding region. The helical transmembrane segment at S1659–G1679 threads the bilayer. The interval S1680–G1691 is NS3-binding. Topologically, residues S1680–Q1806 are cytoplasmic. The helical transmembrane segment at T1807 to A1827 threads the bilayer. Residues T1828 to A1829 lie on the Lumenal side of the membrane. The helical transmembrane segment at F1830–I1850 threads the bilayer. A topological domain (cytoplasmic) is located at residue D1851. A helical transmembrane segment spans residues I1852 to G1872. Over E1873–N1882 the chain is Lumenal. Residues L1883 to L1903 traverse the membrane as a helical segment. Residues R1904–C1973 lie on the Cytoplasmic side of the membrane. The S-palmitoyl cysteine; by host moiety is linked to residue C1973. Residues D1974 to Q2003 lie within the membrane without spanning it. Topologically, residues L2004 to R2993 are cytoplasmic. Zn(2+) contacts are provided by C2012, C2030, C2032, and C2053. The interval E2121–A2209 is FKBP8-binding. The transcriptional activation stretch occupies residues E2121–P2334. The segment at P2136 to P2140 is interaction with non-structural protein 4A. The interval R2190 to E2441 is interaction with host SKP2. Phosphoserine; by host is present on residues S2195, S2198, S2202, S2205, S2208, and S2211. The segment at S2211–K2250 is ISDR. Residues S2211–F2276 are interaction with EIF2AK2/PKR. Positions K2250 to Y2307 are NS4B-binding. The segment at E2300–P2378 is V3. Disordered regions lie at residues C2315–V2342 and P2359–S2412. Over residues P2316–L2327 the composition is skewed to pro residues. The SH3-binding motif lies at P2323–P2326. The Nuclear localization signal motif lies at P2328–L2337. Polar residues predominate over residues I2361–D2375. Residues S2376–N2385 are compositionally biased toward basic and acidic residues. S2465 is modified (phosphoserine; by host). Residues P2637–D2755 form the RdRp catalytic domain. Mg(2+)-binding residues include D2643, D2741, and D2742. Residues N2994–R3014 traverse the membrane as a helical segment.

The protein belongs to the hepacivirus polyprotein family. Homooligomer. Interacts with E1 (via C-terminus). Interacts with the non-structural protein 5A. Interacts (via N-terminus) with host STAT1 (via SH2 domain); this interaction results in decreased STAT1 phosphorylation and ubiquitin-mediated proteasome-dependent STAT1 degradation, leading to decreased IFN-stimulated gene transcription. Interacts with host STAT3; this interaction constitutively activates STAT3. Interacts with host LTBR receptor. Interacts with host TNFRSF1A receptor and possibly induces apoptosis. Interacts with host HNRPK. Interacts with host YWHAE. Interacts with host UBE3A/E6AP. Interacts with host DDX3X. Interacts with host APOA2. Interacts with host RXRA protein. Interacts with host SP110 isoform 3/Sp110b; this interaction sequesters the transcriptional corepressor SP110 away from the nucleus. Interacts with host CREB3 nuclear transcription protein; this interaction triggers cell transformation. Interacts with host ACY3. Interacts with host C1QR1. Interacts with host RBM24; this interaction, which enhances the interaction of the mature core protein with 5'-UTR, may inhibit viral translation and favor replication. Interacts with host EIF2AK2/PKR; this interaction induces the autophosphorylation of EIF2AK2. Part of the viral assembly initiation complex composed of NS2, E1, E2, NS3, NS4A, NS5A and the mature core protein. As to quaternary structure, forms a heterodimer with envelope glycoprotein E2. Interacts with mature core protein. Interacts with protease NS2. The heterodimer E1/E2 interacts with host CLDN1; this interaction plays a role in viral entry into host cell. Interacts with host SPSB2 (via C-terminus). Part of the viral assembly initiation complex composed of NS2, E1, E2, NS3, NS4A, NS5A and the mature core protein. Interacts with host NEURL3; this interaction prevents E1 binding to glycoprotein E2. In terms of assembly, forms a heterodimer with envelope glycoprotein E1. Interacts with host CD81 and SCARB1 receptors; these interactions play a role in viral entry into host cell. Interacts with host EIF2AK2/PKR; this interaction inhibits EIF2AK2 and probably allows the virus to evade the innate immune response. Interacts with host CD209/DC-SIGN and CLEC4M/DC-SIGNR. Interact with host SPCS1; this interaction is essential for viral particle assembly. Interacts with protease NS2. The heterodimer E1/E2 interacts with host CLDN1; this interaction plays a role in viral entry into host cell. Part of the viral assembly initiation complex composed of NS2, E1, E2, NS3, NS4A, NS5A and the mature core protein. Interacts with host SLC3A2/4F2hc; the interaction may facilitate viral entry into host cell. Interacts with human PLSCR1. Homohexamer. Homoheptamer. Interacts with protease NS2. As to quaternary structure, homodimer. Interacts with host SPCS1; this interaction is essential for viral particle assembly. Interacts with envelope glycoprotein E1. Interacts with envelope glycoprotein E2. Interacts with viroporin p7. Interacts with serine protease/helicase NS3. Part of the replication complex composed of NS2, NS3, NS4A, NS4B, NS5A and the RNA-directed RNA polymerase embedded in an ER-derived membranous web. Part of the viral assembly initiation complex composed of NS2, E1, E2, NS3, NS4A, NS5A and the mature core protein. In terms of assembly, interacts with protease NS2. Interacts with non-structural protein 4A; this interaction stabilizes the folding of NS3 serine protease. NS3-NS4A interaction is essential for NS3 activation and allows membrane anchorage of the latter. NS3/NS4A complex also prevents phosphorylation of host IRF3, thus preventing the establishment of dsRNA induced antiviral state. Interacts with host MAVS; this interaction leads to the cleavage and inhibition of host MAVS. Interacts with host TICAM1; this interaction leads to the cleavage and inhibition of host TICAM1. Interacts with host TANK-binding kinase/TBK1; this interaction results in the inhibition of the association between TBK1 and IRF3, which leads to the inhibition of IRF3 activation. Interacts with host RBM24. Part of the replication complex composed of NS2, NS3, NS4A, NS4B, NS5A and the RNA-directed RNA polymerase embedded in an ER-derived membranous web. Part of the viral assembly initiation complex composed of NS2, E1, E2, NS3, NS4A, NS5A and the mature core protein. Interacts with NS3 serine protease; this interaction stabilizes the folding of NS3 serine protease. NS3-NS4A interaction is essential for NS3 activation and allows membrane anchorage of the latter. Interacts with non-structural protein 5A (via N-terminus). Part of the replication complex composed of NS2, NS3, NS4A, NS4B, NS5A and the RNA-directed RNA polymerase embedded in an ER-derived membranous web. Part of the viral assembly initiation complex composed of NS2, E1, E2, NS3, NS4A, NS5A and the mature core protein. As to quaternary structure, homomultimer. Interacts with non-structural protein NS5A. Interacts with host PLA2G4C; this interaction likely initiates the recruitment of replication complexes to lipid droplets. Interacts with host STING; this interaction disrupts the interaction between STING and TBK1 thereby suppressing the interferon signaling. Part of the replication complex composed of NS2, NS3, NS4A, NS4B, NS5A and the RNA-directed RNA polymerase embedded in an ER-derived membranous web. In terms of assembly, monomer. Homodimer; dimerization is required for RNA-binding. Interacts with the mature core protein. Interacts (via N-terminus) with non-structural protein 4A. Interacts with non-structural protein 4B. Interacts (via region D2) with RNA-directed RNA polymerase. Part of the viral assembly initiation complex composed of NS2, E1, E2, NS3, NS4A, NS5A and the mature core protein. Part of the replication complex composed of NS2, NS3, NS4A, NS4B, NS5A and the RNA-directed RNA polymerase embedded in an ER-derived membranous web. Interacts with host GRB2. Interacts with host BIN1. Interacts with host PIK3R1. Interacts with host SRCAP. Interacts with host FKBP8. Interacts (via C-terminus) with host VAPB (via MSP domain). Interacts with host EIF2AK2/PKR; this interaction leads to disruption of EIF2AK2 dimerization by NS5A and probably allows the virus to evade the innate immune response. Interacts (via N-terminus) with host PACSIN2 (via N-terminus); this interaction attenuates protein kinase C alpha-mediated phosphorylation of PACSIN2 by disrupting the interaction between PACSIN2 and PRKCA. Interacts (via N-terminus) with host SRC kinase (via SH2 domain). Interacts with most Src-family kinases. Interacts with host IFI27 and SKP2; promotes the ubiquitin-mediated proteasomal degradation of NS5A. Interacts with host GPS2. Interacts with host TNFRSF21; this interaction allows the modulation by the virus of JNK, p38 MAPK, STAT3, and Akt signaling pathways in a DR6-dependent manner. Interacts (via N-terminus) with host CIDEB (via N-terminus); this interaction seems to regulate the association of HCV particles with APOE. Interacts with host CHKA/Choline Kinase-alpha; CHKA bridges host PI4KA and NS5A and potentiates NS5A-stimulated PI4KA activity, which then facilitates the targeting of the ternary complex to the ER for viral replication. Interacts with host SPSB2 (via C-terminus); this interaction targets NS5A for ubiquitination and degradation. Interacts with host RAB18; this interaction may promote the association of NS5A and other replicase components with lipid droplets. Interacts (via region D2) with host PPIA/CYPA; the interaction stimulates RNA-binding ability of NS5A and is dependent on the peptidyl-prolyl cis-trans isomerase activity of PPIA/CYPA. Interacts with host TRIM14; this interaction induces the degradation of NS5A. Homooligomer. Interacts with non-structural protein 5A. Interacts with host VAPB. Interacts with host PRK2/PKN2. Interacts with host HNRNPA1 and SEPT6; these interactions facilitate viral replication. Part of the replication complex composed of NS2, NS3, NS4A, NS4B, NS5A and the RNA-directed RNA polymerase. It depends on Zn(2+) as a cofactor. Requires Mg(2+) as cofactor. Specific enzymatic cleavages in vivo yield mature proteins. The structural proteins, core, E1, E2 and p7 are produced by proteolytic processing by host signal peptidases. The core protein precursor is synthesized as a 23 kDa, which is retained in the ER membrane through the hydrophobic signal peptide. Cleavage by the signal peptidase releases the 21 kDa mature core protein. The cleavage of the core protein precursor occurs between aminoacids 176 and 188 but the exact cleavage site is not known. Some degraded forms of the core protein appear as well during the course of infection. The other proteins (p7, NS2, NS3, NS4A, NS4B, NS5A and NS5B) are cleaved by the viral proteases. Autoprocessing between NS2 and NS3 is mediated by the NS2 cysteine protease catalytic domain and regulated by the NS3 N-terminal domain. Post-translationally, phosphorylated by host PKC and PKA. In terms of processing, ubiquitinated; mediated by UBE3A and leading to core protein subsequent proteasomal degradation. Highly N-glycosylated. Post-translationally, palmitoylation is required for NS2/3 autoprocessing and E2 recruitment to membranes. In terms of processing, palmitoylated. This modification may play a role in its polymerization or in protein-protein interactions. Phosphorylated on serines in a basal form termed p56. p58 is a hyperphosphorylated form of p56. p56 and p58 coexist in the cell in roughly equivalent amounts. Hyperphosphorylation is dependent on the presence of NS4A. Host CSNK1A1/CKI-alpha or RPS6KB1 kinases may be responsible for NS5A phosphorylation. Post-translationally, tyrosine phosphorylation is essential for the interaction with host SRC. In terms of processing, the N-terminus is phosphorylated by host PRK2/PKN2.

It localises to the host endoplasmic reticulum membrane. The protein localises to the host mitochondrion membrane. It is found in the virion. The protein resides in the host cytoplasm. Its subcellular location is the host nucleus. It localises to the host lipid droplet. The protein localises to the virion membrane. It is found in the host mitochondrion. The protein resides in the host cell membrane. Its subcellular location is the host perinuclear region. It carries out the reaction Hydrolysis of four peptide bonds in the viral precursor polyprotein, commonly with Asp or Glu in the P6 position, Cys or Thr in P1 and Ser or Ala in P1'.. It catalyses the reaction a ribonucleoside 5'-triphosphate + H2O = a ribonucleoside 5'-diphosphate + phosphate + H(+). The enzyme catalyses ATP + H2O = ADP + phosphate + H(+). The catalysed reaction is RNA(n) + a ribonucleoside 5'-triphosphate = RNA(n+1) + diphosphate. Inhibited by the antiviral drug hexamethylene amiloride. Inhibition by amantadine appears to be genotype-dependent. Also inhibited by long-alkyl-chain iminosugar derivatives. Its activity is regulated as follows. Activity is up-regulated by PRK2/PKN2-mediated phosphorylation. Its function is as follows. Packages viral RNA to form a viral nucleocapsid, and promotes virion budding. Participates in the viral particle production as a result of its interaction with the non-structural protein 5A. Binds RNA and may function as a RNA chaperone to induce the RNA structural rearrangements taking place during virus replication. Modulates viral translation initiation by interacting with viral IRES and 40S ribosomal subunit. Affects various cell signaling pathways, host immunity and lipid metabolism. Prevents the establishment of cellular antiviral state by blocking the interferon-alpha/beta (IFN-alpha/beta) and IFN-gamma signaling pathways and by blocking the formation of phosphorylated STAT1 and promoting ubiquitin-mediated proteasome-dependent degradation of STAT1. Activates STAT3 leading to cellular transformation. Regulates the activity of cellular genes, including c-myc and c-fos. May repress the promoter of p53, and sequester CREB3 and SP110 isoform 3/Sp110b in the cytoplasm. Represses cell cycle negative regulating factor CDKN1A, thereby interrupting an important check point of normal cell cycle regulation. Targets transcription factors involved in the regulation of inflammatory responses and in the immune response: suppresses TNF-induced NF-kappa-B activation, and activates AP-1. Binds to dendritic cells (DCs) via C1QR1, resulting in down-regulation of T-lymphocytes proliferation. Alters lipid metabolism by interacting with hepatocellular proteins involved in lipid accumulation and storage. Induces up-regulation of FAS promoter activity, and thereby contributes to the increased triglyceride accumulation in hepatocytes (steatosis). Functionally, forms a heterodimer with envelope glycoprotein E2, which mediates virus attachment to the host cell, virion internalization through clathrin-dependent endocytosis and fusion with host membrane. Fusion with the host cell is most likely mediated by both E1 and E2, through conformational rearrangements of the heterodimer required for fusion rather than a classical class II fusion mechanism. E1/E2 heterodimer binds host apolipoproteins such as APOB and ApoE thereby forming a lipo-viro-particle (LVP). APOE associated to the LVP allows the initial virus attachment to cell surface receptors such as the heparan sulfate proteoglycans (HSPGs), syndecan-1 (SDC1), syndecan-1 (SDC2), the low-density lipoprotein receptor (LDLR) and scavenger receptor class B type I (SCARB1). The cholesterol transfer activity of SCARB1 allows E2 exposure and binding of E2 to SCARB1 and the tetraspanin CD81. E1/E2 heterodimer binding on CD81 activates the epithelial growth factor receptor (EGFR) signaling pathway. Diffusion of the complex E1-E2-EGFR-SCARB1-CD81 to the cell lateral membrane allows further interaction with Claudin 1 (CLDN1) and occludin (OCLN) to finally trigger HCV entry. Forms a heterodimer with envelope glycoprotein E1, which mediates virus attachment to the host cell, virion internalization through clathrin-dependent endocytosis and fusion with host membrane. Fusion with the host cell is most likely mediated by both E1 and E2, through conformational rearrangements of the heterodimer required for fusion rather than a classical class II fusion mechanism. The interaction between envelope glycoprotein E2 and host apolipoprotein E/APOE allows the proper assembly, maturation and infectivity of the viral particles. This interaction is probably promoted via the up-regulation of cellular autophagy by the virus. E1/E2 heterodimer binds host apolipoproteins such as APOB and APOE thereby forming a lipo-viro-particle (LVP). APOE associated to the LVP allows the initial virus attachment to cell surface receptors such as the heparan sulfate proteoglycans (HSPGs), syndecan-1 (SDC1), syndecan-1 (SDC2), the low-density lipoprotein receptor (LDLR) and scavenger receptor class B type I (SCARB1). The cholesterol transfer activity of SCARB1 allows E2 exposure and binding of E2 to SCARB1 and the tetraspanin CD81. E1/E2 heterodimer binding on CD81 activates the epithelial growth factor receptor (EGFR) signaling pathway. Diffusion of the complex E1-E2-EGFR-SCARB1-CD81 to the cell lateral membrane allows further interaction with Claudin 1 (CLDN1) and occludin (OCLN) to finally trigger HCV entry. Inhibits host EIF2AK2/PKR activation, preventing the establishment of an antiviral state. Viral ligand for CD209/DC-SIGN and CLEC4M/DC-SIGNR, which are respectively found on dendritic cells (DCs), and on liver sinusoidal endothelial cells and macrophage-like cells of lymph node sinuses. These interactions allow the capture of circulating HCV particles by these cells and subsequent facilitated transmission to permissive cells such as hepatocytes and lymphocyte subpopulations. The interaction between E2 and host amino acid transporter complex formed by SLC3A2 and SLC7A5/LAT1 may facilitate viral entry into host cell. In terms of biological role, ion channel protein that acts as a viroporin and plays an essential role in the assembly, envelopment and secretion of viral particles. Regulates the host cell secretory pathway, which induces the intracellular retention of viral glycoproteins and favors assembly of viral particles. Creates a pore in acidic organelles and releases Ca(2+) and H(+) in the cytoplasm of infected cells, leading to a productive viral infection. High levels of cytoplasmic Ca(2+) may trigger membrane trafficking and transport of viral ER-associated proteins to viroplasms, sites of viral genome replication. This ionic imbalance induces the assembly of the inflammasome complex, which triggers the maturation of pro-IL-1beta into IL-1beta through the action of caspase-1. Targets also host mitochondria and induces mitochondrial depolarization. In addition of its role as a viroporin, acts as a lipid raft adhesion factor. Its function is as follows. Cysteine protease required for the proteolytic auto-cleavage between the non-structural proteins NS2 and NS3. The N-terminus of NS3 is required for the function of NS2 protease (active region NS2-3). Promotes the initiation of viral particle assembly by mediating the interaction between structural and non-structural proteins. Functionally, displays three enzymatic activities: serine protease with a chymotrypsin-like fold, NTPase and RNA helicase. NS3 serine protease, in association with NS4A, is responsible for the cleavages of NS3-NS4A, NS4A-NS4B, NS4B-NS5A and NS5A-NS5B. The NS3/NS4A complex prevents phosphorylation of host IRF3, thus preventing the establishment of dsRNA induced antiviral state. The NS3/NS4A complex induces host amino acid transporter component SLC3A2, thus contributing to HCV propagation. NS3 RNA helicase binds to RNA and unwinds both dsDNA and dsRNA in the 3' to 5' direction, and likely resolves RNA complicated stable secondary structures in the template strand. Binds a single ATP and catalyzes the unzipping of a single base pair of dsRNA. Inhibits host antiviral proteins TBK1 and IRF3 thereby preventing the establishment of an antiviral state. Cleaves host MAVS/CARDIF thereby preventing the establishment of an antiviral state. Cleaves host TICAM1/TRIF, thereby disrupting TLR3 signaling and preventing the establishment of an antiviral state. Induces a specific membrane alteration that serves as a scaffold for the virus replication complex. This membrane alteration gives rise to the so-called ER-derived membranous web that contains the replication complex. NS4B self-interaction contributes to its function in membranous web formation. Promotes host TRIF protein degradation in a CASP8-dependent manner thereby inhibiting host TLR3-mediated interferon signaling. Disrupts the interaction between STING and TBK1 contributing to the inhibition of interferon signaling. In terms of biological role, phosphorylated protein that is indispensable for viral replication and assembly. Both hypo- and hyperphosphorylated states are required for the viral life cycle. The hyperphosphorylated form of NS5A is an inhibitor of viral replication. Involved in RNA-binding and especially in binding to the viral genome. Zinc is essential for RNA-binding. Participates in the viral particle production as a result of its interaction with the mature viral core protein. Its interaction with host VAPB may target the viral replication complex to vesicles. Down-regulates viral IRES translation initiation. Mediates interferon resistance, presumably by interacting with and inhibiting host EIF2AK2/PKR. Prevents BIN1-induced apoptosis. Acts as a transcriptional activator of some host genes important for viral replication when localized in the nucleus. Via the interaction with host PACSIN2, modulates lipid droplet formation in order to promote virion assembly. Modulates TNFRSF21/DR6 signaling pathway for viral propagation. Its function is as follows. RNA-dependent RNA polymerase that performs primer-template recognition and RNA synthesis during viral replication. Initiates RNA transcription/replication at a flavin adenine dinucleotide (FAD), resulting in a 5'- FAD cap on viral RNAs. In this way, recognition of viral 5' RNA by host pattern recognition receptors can be bypassed, thereby evading activation of antiviral pathways. This is Genome polyprotein from Hepatitis C virus genotype 5a (isolate EUH1480) (HCV).